A 558-amino-acid chain; its full sequence is Leucine-rich repeat-containing protein 71 (558 aa).

Low complexity predominate over residues 1–18 (MSSEPSTTGTSPRTPRPG). 2 disordered regions span residues 1–55 (MSSE…NPEE) and 86–112 (RVQQSSVPSASTSEKPVLDDQRPSASC). The span at 28-38 (KKGDRAAKDKT) shows a compositional bias: basic and acidic residues. A compositionally biased stretch (polar residues) spans 86 to 99 (RVQQSSVPSASTSE). 4 LRR repeats span residues 196–216 (TLRKVSLEGNPIPEQSFSKLM), 221–241 (TIVHLSLRNNNINDHGAQLLG), 253–274 (TLVSLNLAFNHIGDVGAGYIAD), and 281–302 (SLLWLSLAHNHIQDKGALKLAE). Residues 325-415 (GTQERSRSPS…DAAKAGKGKV (91 aa)) form a disordered region. 2 stretches are compositionally biased toward basic and acidic residues: residues 339–348 (GDSKAEREKS) and 380–391 (KTGEVVKKEEKL).

The sequence is that of Leucine-rich repeat-containing protein 71 (Lrrc71) from Mus musculus (Mouse).